The primary structure comprises 168 residues: G/U mismatch-specific DNA glycosylase (168 aa).

It belongs to the uracil-DNA glycosylase (UDG) superfamily. TDG/mug family. As to quaternary structure, binds DNA as a monomer.

The protein localises to the cytoplasm. The catalysed reaction is Specifically hydrolyzes mismatched double-stranded DNA and polynucleotides, releasing free uracil.. Its function is as follows. Excises ethenocytosine and uracil, which can arise by alkylation or deamination of cytosine, respectively, from the corresponding mispairs with guanine in ds-DNA. It is capable of hydrolyzing the carbon-nitrogen bond between the sugar-phosphate backbone of the DNA and the mispaired base. The complementary strand guanine functions in substrate recognition. Required for DNA damage lesion repair in stationary-phase cells. This chain is G/U mismatch-specific DNA glycosylase, found in Shigella dysenteriae serotype 1 (strain Sd197).